The chain runs to 261 residues: MAGDSEQTLQNHQQPNGGEPFLIGVSGGTASGKSSVCAKIVQLLGQNEVDYRQKQVVILSQDSFYRVLTSEQKAKALKGQFNFDHPDAFDNELILKTLKEITEGKTVQIPVYDFVSHSRKEETVTVYPADVVLFEGILAFYSQEVRDLFQMKLFVDTDADTRLSRRVLRDISERGRDLEQILSQYITFVKPAFEEFCLPTKKYADVIIPRGADNLVAINLIVQHIQDILNGGPSKRQTNGCLNGYTPSRKRQASESSSRPH.

The segment covering 1-16 (MAGDSEQTLQNHQQPN) has biased composition (polar residues). The segment at 1–24 (MAGDSEQTLQNHQQPNGGEPFLIG) is disordered. A2 carries the post-translational modification N-acetylalanine. 27 to 35 (GGTASGKSS) contacts ATP. Substrate is bound by residues D84, Y112, H117, R166, R176, and Q184. D213 contacts ATP. Positions 236–261 (RQTNGCLNGYTPSRKRQASESSSRPH) are disordered. A Phosphoserine modification is found at S254.

It belongs to the uridine kinase family. As to quaternary structure, homotetramer. As to expression, according to PubMed:8812458; testis-specific. According to PubMed:11306702, placenta-specific.

It carries out the reaction uridine + ATP = UMP + ADP + H(+). The catalysed reaction is cytidine + ATP = CMP + ADP + H(+). Its pathway is pyrimidine metabolism; CTP biosynthesis via salvage pathway; CTP from cytidine: step 1/3. It participates in pyrimidine metabolism; UMP biosynthesis via salvage pathway; UMP from uridine: step 1/1. In terms of biological role, phosphorylates uridine and cytidine to uridine monophosphate and cytidine monophosphate. Does not phosphorylate deoxyribonucleosides or purine ribonucleosides. Can use ATP or GTP as a phosphate donor. Can also phosphorylate cytidine and uridine nucleoside analogs such as 6-azauridine, 5-fluorouridine, 4-thiouridine, 5-bromouridine, N(4)-acetylcytidine, N(4)-benzoylcytidine, 5-fluorocytidine, 2-thiocytidine, 5-methylcytidine, and N(4)-anisoylcytidine. The protein is Uridine-cytidine kinase 2 (UCK2) of Homo sapiens (Human).